The primary structure comprises 414 residues: uncharacterized protein (414 aa).

This sequence belongs to the glycosyltransferase 28 family.

This is an uncharacterized protein from Mycobacterium tuberculosis (strain CDC 1551 / Oshkosh).